A 359-amino-acid polypeptide reads, in one-letter code: MSYRRELEKYRDLDEDEILGALTEEELRTLENELDELDPDNALLPAGLRQKDQTTKAPTGPFKREELLDHLEKQAKEFKDREDLVPYTGEKRGKVWVPKQKPLDPVLESVTLEPELEEALANASDAELCDIAAILGMHTLMSNQQYYQALSSSSIMNKEGLNSVIKPTQYKPVPDEEPNSTDVEETLERIKNNDPKLEEVNLNNIRNIPIPTLKAYAEALKENSYVKKFSIVGTRSNDPVAYALAEMLKENKVLKTLNVESNFISGAGILRLVEALPYNTSLVEMKIDNQSQPLGNKVEMEIVSMLEKNATLLKFGYHFTQQGPRLRASNAMMNNNDLVRKRRLADLTGPIIPKCRSGV.

The segment at 36-61 is disordered; the sequence is ELDPDNALLPAGLRQKDQTTKAPTGP. The interval 39–138 is tropomyosin-binding; it reads PDNALLPAGL…CDIAAILGMH (100 aa).

This sequence belongs to the tropomodulin family. In terms of assembly, binds to the N-terminus of tropomyosin and to actin. Interacts with FLII. In terms of tissue distribution, highly expressed in the erythrocyte, heart and skeletal muscle.

Its subcellular location is the cytoplasm. The protein resides in the cytoskeleton. Functionally, blocks the elongation and depolymerization of the actin filaments at the pointed end. The Tmod/TM complex contributes to the formation of the short actin protofilament, which in turn defines the geometry of the membrane skeleton. May play an important role in regulating the organization of actin filaments by preferentially binding to a specific tropomyosin isoform at its N-terminus. The chain is Tropomodulin-1 (TMOD1) from Homo sapiens (Human).